The sequence spans 497 residues: Probable cytosol aminopeptidase (497 aa).

2 residues coordinate Mn(2+): Lys263 and Asp268. Residue Lys275 is part of the active site. Asp286, Asp345, and Glu347 together coordinate Mn(2+). Arg349 is a catalytic residue.

This sequence belongs to the peptidase M17 family. Mn(2+) is required as a cofactor.

It is found in the cytoplasm. It carries out the reaction Release of an N-terminal amino acid, Xaa-|-Yaa-, in which Xaa is preferably Leu, but may be other amino acids including Pro although not Arg or Lys, and Yaa may be Pro. Amino acid amides and methyl esters are also readily hydrolyzed, but rates on arylamides are exceedingly low.. It catalyses the reaction Release of an N-terminal amino acid, preferentially leucine, but not glutamic or aspartic acids.. In terms of biological role, presumably involved in the processing and regular turnover of intracellular proteins. Catalyzes the removal of unsubstituted N-terminal amino acids from various peptides. The chain is Probable cytosol aminopeptidase from Methylorubrum populi (strain ATCC BAA-705 / NCIMB 13946 / BJ001) (Methylobacterium populi).